Reading from the N-terminus, the 219-residue chain is Apoptosis regulator OPG045 (219 aa).

This sequence belongs to the orthopoxvirus OPG045 family. In terms of assembly, homodimer. Interacts with host pro-apoptotic protein BCL2L11 (via BH3 domain). Interacts with host NLRP1. Interacts with host BAK.

Its subcellular location is the host mitochondrion outer membrane. The protein localises to the host cytoplasm. In terms of biological role, plays a role in evading host innate immune response by inhibiting host inflammasome activation. Interacts with and inhibits NLR-mediated interleukin-1 beta/IL1B production in infected cells. At the host mitochondria outer membrane, interacts with the BH3 domain of host BAK and prevents BAK from binding active BAX. In turn, host apoptosis is inhibited. The protein is Apoptosis regulator OPG045 (OPG045) of Cynomys gunnisoni (Gunnison's prairie dog).